Here is a 270-residue protein sequence, read N- to C-terminus: UPF0354 protein BPUM_2629 (270 aa).

This sequence belongs to the UPF0354 family.

This chain is UPF0354 protein BPUM_2629, found in Bacillus pumilus (strain SAFR-032).